A 636-amino-acid chain; its full sequence is Interleukin-27 receptor subunit alpha (636 aa).

The signal sequence occupies residues 1 to 32 (MRGGRGAPFWLWPLPKLALLPLLWVLFQRTRP). Residues 33-516 (QGSAGPLQCY…HLPDNTLRWK (484 aa)) are Extracellular-facing. N-linked (GlcNAc...) asparagine glycosylation is found at Asn51 and Asn76. The Fibronectin type-III 1 domain occupies 131 to 231 (PRLGPDVDFS…PILSFQTPPS (101 aa)). The WSXWS motif motif lies at 217–221 (WGEWS). N-linked (GlcNAc...) asparagine glycosylation is found at Asn302, Asn311, Asn374, Asn382, and Asn467. 2 consecutive Fibronectin type-III domains span residues 322-417 (APRS…LAPL) and 419-511 (GPTL…LPDN). The helical transmembrane segment at 517–537 (VLPGILFLWGLFLLGCGLSLA) threads the bilayer. Residues 538–636 (TSGRCYHLRH…LGPPRPQVLA (99 aa)) are Cytoplasmic-facing. The Box 1 motif motif lies at 554 to 562 (VWEKVPDPA). The segment at 587–636 (EVEEMEPPPVMESSQPAQATAPLDSGYEKHFLPTPEELGLLGPPRPQVLA) is disordered. Positions 618-628 (LPTPEELGLLG) are enriched in low complexity.

Belongs to the type I cytokine receptor family. Type 2 subfamily. As to quaternary structure, component of a receptor complex composed of IL6ST/GP130, IL27RA/WSX1 and CNTFR which interacts with the neuroprotective peptide humanin. In terms of tissue distribution, highly expressed in lymphoid tissues such as spleen, lymph nodes and peripheral blood leukocytes. Weakly expressed in other tissues examined including heart, brain, fetal and adult lung, liver, skeletal muscle, kidney, pancreas, prostate, testis, ovary, small intestine, kidney and colon. In the lymphoid system, higher level expression in CD4+ T-cell subsets than in CD8+ T-cell subsets. Also weaker expression in CD19+ B-cells and monocytes.

The protein localises to the membrane. Receptor for IL27. Requires IL6ST/GP130 to mediate signal transduction in response to IL27. This signaling system acts through STAT3 and STAT1. Acts as a receptor for the neuroprotective peptide humanin as part of a complex with IL6ST/GP130 and CNTFR. Involved in the regulation of Th1-type immune responses. Also appears to be involved in innate defense mechanisms. The protein is Interleukin-27 receptor subunit alpha (IL27RA) of Homo sapiens (Human).